A 575-amino-acid chain; its full sequence is Dual specificity protein phosphatase YVH1 (575 aa).

A disordered region spans residues Lys-185 to Lys-213. Residues Asn-187–Asn-208 are compositionally biased toward low complexity. In terms of domain architecture, Tyrosine-protein phosphatase spans Asn-283–Thr-435. Residue Cys-379 is the Phosphocysteine intermediate of the active site. The Zn(2+) site is built by Cys-476 and Cys-530.

It belongs to the protein-tyrosine phosphatase family. Non-receptor class dual specificity subfamily. Interacts with PES. Zn(2+) serves as cofactor.

The protein localises to the cytoplasm. It is found in the nucleus. It catalyses the reaction O-phospho-L-tyrosyl-[protein] + H2O = L-tyrosyl-[protein] + phosphate. It carries out the reaction O-phospho-L-seryl-[protein] + H2O = L-seryl-[protein] + phosphate. In terms of biological role, dual specificity protein phosphatase which dephosphorylates both phosphotyrosine and phosphoserine residues. In Plasmodium falciparum (isolate 3D7), this protein is Dual specificity protein phosphatase YVH1.